The following is a 517-amino-acid chain: Golgi-associated kinase 1B (517 aa).

At 1–36 the chain is on the cytoplasmic side; the sequence is MTCPDKPGQLVNWFVCSLCAPRVCKLWSSRRPRTRR. A helical; Signal-anchor for type II membrane protein transmembrane segment spans residues 37 to 56; sequence NLLLGTACAIYLGFLVSQVG. The Extracellular portion of the chain corresponds to 57 to 517; it reads RGSFQHGQAT…HGARVLPMNE (461 aa). N-linked (GlcNAc...) asparagine glycosylation is found at asparagine 98 and asparagine 287.

The protein belongs to the GASK family.

The protein localises to the golgi apparatus membrane. The sequence is that of Golgi-associated kinase 1B from Mus musculus (Mouse).